The chain runs to 82 residues: Large ribosomal subunit protein uL23 (82 aa).

It belongs to the universal ribosomal protein uL23 family. In terms of assembly, part of the 50S ribosomal subunit. Contacts protein L29.

Its function is as follows. Binds to 23S rRNA. One of the proteins that surrounds the polypeptide exit tunnel on the outside of the ribosome. The polypeptide is Large ribosomal subunit protein uL23 (Methanospirillum hungatei JF-1 (strain ATCC 27890 / DSM 864 / NBRC 100397 / JF-1)).